A 756-amino-acid polypeptide reads, in one-letter code: Catalase-peroxidase (756 aa).

The segment at residues tryptophan 91–tyrosine 244 is a cross-link (tryptophyl-tyrosyl-methioninium (Trp-Tyr) (with M-270)). The Proton acceptor role is filled by histidine 92. Residues alanine 198–asparagine 230 form a disordered region. Residues proline 214 to arginine 223 show a composition bias toward basic and acidic residues. A cross-link (tryptophyl-tyrosyl-methioninium (Tyr-Met) (with W-91)) is located at residues tyrosine 244–methionine 270. Histidine 285 is a binding site for heme b. The disordered stretch occupies residues lysine 371–alanine 390.

Belongs to the peroxidase family. Peroxidase/catalase subfamily. Homodimer or homotetramer. Heme b serves as cofactor. Formation of the three residue Trp-Tyr-Met cross-link is important for the catalase, but not the peroxidase activity of the enzyme.

The catalysed reaction is H2O2 + AH2 = A + 2 H2O. It carries out the reaction 2 H2O2 = O2 + 2 H2O. Bifunctional enzyme with both catalase and broad-spectrum peroxidase activity. This Pseudomonas savastanoi pv. phaseolicola (strain 1448A / Race 6) (Pseudomonas syringae pv. phaseolicola (strain 1448A / Race 6)) protein is Catalase-peroxidase.